The following is a 455-amino-acid chain: UDP-N-acetylmuramoylalanine--D-glutamate ligase (455 aa).

117 to 123 serves as a coordination point for ATP; it reads GSAGKTT.

Belongs to the MurCDEF family.

It is found in the cytoplasm. It carries out the reaction UDP-N-acetyl-alpha-D-muramoyl-L-alanine + D-glutamate + ATP = UDP-N-acetyl-alpha-D-muramoyl-L-alanyl-D-glutamate + ADP + phosphate + H(+). It participates in cell wall biogenesis; peptidoglycan biosynthesis. Functionally, cell wall formation. Catalyzes the addition of glutamate to the nucleotide precursor UDP-N-acetylmuramoyl-L-alanine (UMA). The sequence is that of UDP-N-acetylmuramoylalanine--D-glutamate ligase from Symbiobacterium thermophilum (strain DSM 24528 / JCM 14929 / IAM 14863 / T).